The chain runs to 95 residues: Small ribosomal subunit protein uS14 (95 aa).

Belongs to the universal ribosomal protein uS14 family. Part of the 30S ribosomal subunit. Contacts proteins S3 and S10.

In terms of biological role, binds 16S rRNA, required for the assembly of 30S particles and may also be responsible for determining the conformation of the 16S rRNA at the A site. This is Small ribosomal subunit protein uS14 (rpsN) from Carsonella ruddii.